Consider the following 510-residue polypeptide: NAD(P)H-quinone oxidoreductase subunit 2 B, chloroplastic (510 aa).

Transmembrane regions (helical) follow at residues 24–44, 57–77, 99–119, 124–144, 149–169, 183–203, 227–247, 295–315, 323–343, 354–374, 395–415, 418–438, and 484–504; these read LLLF…GLIL, IPWL…ALLF, IFQF…VEYI, MAIA…MFLC, LITI…LSGY, YLLM…WLYG, PGIS…LSPA, WHLL…LIAI, MLAY…IVGD, YMLF…LFGL, ALSL…AGFF, LHLF…IGLL, and MIVC…IIAI.

This sequence belongs to the complex I subunit 2 family. As to quaternary structure, NDH is composed of at least 16 different subunits, 5 of which are encoded in the nucleus.

It localises to the plastid. The protein resides in the chloroplast thylakoid membrane. The catalysed reaction is a plastoquinone + NADH + (n+1) H(+)(in) = a plastoquinol + NAD(+) + n H(+)(out). It carries out the reaction a plastoquinone + NADPH + (n+1) H(+)(in) = a plastoquinol + NADP(+) + n H(+)(out). NDH shuttles electrons from NAD(P)H:plastoquinone, via FMN and iron-sulfur (Fe-S) centers, to quinones in the photosynthetic chain and possibly in a chloroplast respiratory chain. The immediate electron acceptor for the enzyme in this species is believed to be plastoquinone. Couples the redox reaction to proton translocation, and thus conserves the redox energy in a proton gradient. In Gossypium hirsutum (Upland cotton), this protein is NAD(P)H-quinone oxidoreductase subunit 2 B, chloroplastic.